We begin with the raw amino-acid sequence, 271 residues long: Insulin-like growth factor-binding protein 5 (271 aa).

The N-terminal stretch at 1–19 (MVLTAVLLLLAACAGSAQG) is a signal peptide. The 81-residue stretch at 22 to 102 (SFVHCEPCDE…LHGRGVCLNE (81 aa)) folds into the IGFBP N-terminal domain. Intrachain disulfides connect Cys26-Cys52, Cys29-Cys54, Cys37-Cys55, Cys44-Cys58, Cys66-Cys79, and Cys73-Cys99. The segment covering 109-121 (AKIERDSREHEEP) has biased composition (basic and acidic residues). Residues 109–129 (AKIERDSREHEEPTTSEMAEE) form a disordered region. A Phosphoserine modification is found at Ser115. Positions 188 to 262 (QGPCRRHMEA…MEYVDGDFQC (75 aa)) constitute a Thyroglobulin type-1 domain. 3 disulfides stabilise this stretch: Cys191–Cys218, Cys229–Cys240, and Cys242–Cys262.

In terms of assembly, interacts with IGF1; this interaction enhances the growth stimulatory effects of IGF1 on fibroblasts. Interacts with CAV1; this interaction allows trafficking of IGFBP5 from the plasma membrane to the nucleus. Interacts with NCL; this interaction is necessary for IGFBP5 localization to the nucleus.

It is found in the secreted. The protein resides in the cytoplasm. It localises to the nucleus. Multifunctional protein that plays a critical role in regulating the availability of IGFs to their receptors and thereby regulates IGF-mediated cellular processes including proliferation, differentiation, and apoptosis in a cell-type specific manner. Increases the cell proliferation of osteoblasts, intestinal smooth muscle cells and neuroblastoma cells. Enhances adhesion and survival of epithelial cells but decreases adhesion of mesenchymal cells. Once secreted, acts as a major mediator of mTORC1-dependent feedback inhibition of IGF1 signaling. Also plays a role in the induction of extracellular matrix (ECM) production and deposition independently of its nuclear translocation and binding to IGFs. Acts itself as a growth factor that can act independently of IGFs to regulate bone formation. Acts as a ligand for the ROR1 receptor which triggers formation of ROR1/HER2 heterodimer to enhance CREB oncogenic signaling. The polypeptide is Insulin-like growth factor-binding protein 5 (IGFBP5) (Bos taurus (Bovine)).